A 142-amino-acid polypeptide reads, in one-letter code: Cystatin-8 (142 aa).

The signal sequence occupies residues Met-1–Arg-21. 2 N-linked (GlcNAc...) asparagine glycosylation sites follow: Asn-27 and Asn-39. The Secondary area of contact motif lies at Gln-77–Leu-81. Intrachain disulfides connect Cys-95/Cys-105 and Cys-119/Cys-139.

The protein belongs to the cystatin family. Proximal caput region of the epididymis. Lower expression in the testis. Within the testis it is localized to the elongating spermatids, whereas within the epididymis it is exclusively synthesized by the proximal caput epithelium.

The protein resides in the secreted. Its function is as follows. Performs a specialized role during sperm development and maturation. This Homo sapiens (Human) protein is Cystatin-8 (CST8).